The chain runs to 178 residues: Ribosome maturation factor RimM (178 aa).

A PRC barrel domain is found at glutamate 101–phenylalanine 178.

This sequence belongs to the RimM family. In terms of assembly, binds ribosomal protein uS19.

It is found in the cytoplasm. An accessory protein needed during the final step in the assembly of 30S ribosomal subunit, possibly for assembly of the head region. Essential for efficient processing of 16S rRNA. May be needed both before and after RbfA during the maturation of 16S rRNA. It has affinity for free ribosomal 30S subunits but not for 70S ribosomes. This chain is Ribosome maturation factor RimM, found in Ectopseudomonas mendocina (strain ymp) (Pseudomonas mendocina).